The sequence spans 225 residues: Leucyl/phenylalanyl-tRNA--protein transferase (225 aa).

The protein belongs to the L/F-transferase family.

The protein resides in the cytoplasm. It carries out the reaction N-terminal L-lysyl-[protein] + L-leucyl-tRNA(Leu) = N-terminal L-leucyl-L-lysyl-[protein] + tRNA(Leu) + H(+). The enzyme catalyses N-terminal L-arginyl-[protein] + L-leucyl-tRNA(Leu) = N-terminal L-leucyl-L-arginyl-[protein] + tRNA(Leu) + H(+). The catalysed reaction is L-phenylalanyl-tRNA(Phe) + an N-terminal L-alpha-aminoacyl-[protein] = an N-terminal L-phenylalanyl-L-alpha-aminoacyl-[protein] + tRNA(Phe). In terms of biological role, functions in the N-end rule pathway of protein degradation where it conjugates Leu, Phe and, less efficiently, Met from aminoacyl-tRNAs to the N-termini of proteins containing an N-terminal arginine or lysine. The protein is Leucyl/phenylalanyl-tRNA--protein transferase of Rhodopseudomonas palustris (strain TIE-1).